We begin with the raw amino-acid sequence, 346 residues long: N-acetyl-gamma-glutamyl-phosphate reductase (346 aa).

C149 is a catalytic residue.

The protein belongs to the NAGSA dehydrogenase family. Type 1 subfamily.

Its subcellular location is the cytoplasm. The catalysed reaction is N-acetyl-L-glutamate 5-semialdehyde + phosphate + NADP(+) = N-acetyl-L-glutamyl 5-phosphate + NADPH + H(+). It participates in amino-acid biosynthesis; L-arginine biosynthesis; N(2)-acetyl-L-ornithine from L-glutamate: step 3/4. Functionally, catalyzes the NADPH-dependent reduction of N-acetyl-5-glutamyl phosphate to yield N-acetyl-L-glutamate 5-semialdehyde. The polypeptide is N-acetyl-gamma-glutamyl-phosphate reductase (Oceanobacillus iheyensis (strain DSM 14371 / CIP 107618 / JCM 11309 / KCTC 3954 / HTE831)).